A 528-amino-acid polypeptide reads, in one-letter code: GMP synthase [glutamine-hydrolyzing] (528 aa).

Residues 22-212 (AILVLDFGSQ…VFKICQSQTN (191 aa)) enclose the Glutamine amidotransferase type-1 domain. Residue cysteine 99 is the Nucleophile of the active site. Active-site residues include histidine 186 and glutamate 188. The region spanning 213–403 (WSLESNVETI…LGIKKEALYR (191 aa)) is the GMPS ATP-PPase domain. Residue 240-246 (SGGTDSL) coordinates ATP.

Homodimer.

The catalysed reaction is XMP + L-glutamine + ATP + H2O = GMP + L-glutamate + AMP + diphosphate + 2 H(+). It participates in purine metabolism; GMP biosynthesis; GMP from XMP (L-Gln route): step 1/1. Its function is as follows. Catalyzes the synthesis of GMP from XMP. The protein is GMP synthase [glutamine-hydrolyzing] of Borrelia garinii subsp. bavariensis (strain ATCC BAA-2496 / DSM 23469 / PBi) (Borreliella bavariensis).